The chain runs to 66 residues: Conotoxin TsMEKL-03 (66 aa).

The signal sequence occupies residues 1 to 9 (VILLMSTQA). Positions 10–38 (LIQSGVEKRSNKIKALSKRKTTAESWWEG) are excised as a propeptide. 3 disulfides stabilise this stretch: Cys-40–Cys-54, Cys-47–Cys-58, and Cys-53–Cys-63.

The protein belongs to the conotoxin O2 superfamily. In terms of tissue distribution, expressed by the venom duct.

The protein resides in the secreted. This chain is Conotoxin TsMEKL-03, found in Conus tessulatus (Tessellate cone).